A 272-amino-acid chain; its full sequence is Putative G-protein coupled receptor GPR32P1 (272 aa).

Residues 1–24 form a disordered region; sequence MNGVSEGTRGCSDRQPGALTQGHS. The Extracellular segment spans residues 1-46; sequence MNGVSEGTRGCSDRQPGALTQGHSCSRKMNASRCLSEEVGSLRPLT. Residue N30 is glycosylated (N-linked (GlcNAc...) asparagine). A helical transmembrane segment spans residues 47 to 67; the sequence is MAVLSASFVVGVLGNGLVPWV. Over 68-78 the chain is Cytoplasmic; that stretch reads TVFRMARTVST. Residues 79 to 99 traverse the membrane as a helical segment; the sequence is VCFFHLALADFMLSLSLPILV. The Extracellular segment spans residues 100-116; sequence YYIVSRQWLLGEWACKL. A disulfide bond links C114 and C191. A helical transmembrane segment spans residues 117-137; sequence YTGFVFLTFSTSNCLLVLISV. The Cytoplasmic segment spans residues 138 to 158; that stretch reads DRCISVLYPVWALNHRTEQRA. Residues 159–179 traverse the membrane as a helical segment; it reads SWLAFGVWLLAAALCSAHLKF. Residues 180–213 are Extracellular-facing; it reads RTTRKWNGCMQCYLQFNLENETAQMWTQEVFGRQ. N199 carries N-linked (GlcNAc...) asparagine glycosylation. Residues 214–234 form a helical membrane-spanning segment; sequence MAVIMAHFLLGFLGPLAIIGT. The Cytoplasmic segment spans residues 235–272; that stretch reads CAHLIRAKLLREGWVHANRPKRLLLVLVSALSAGSHLT.

This sequence belongs to the G-protein coupled receptor 1 family.

It is found in the cell membrane. In terms of biological role, orphan receptor. The polypeptide is Putative G-protein coupled receptor GPR32P1 (GPR32P1) (Homo sapiens (Human)).